A 1483-amino-acid polypeptide reads, in one-letter code: Heme-responsive zinc finger transcription factor HAP1 (1483 aa).

Polar residues predominate over residues Met1 to Ser50. The tract at residues Met1–Lys56 is disordered. Cys64, Cys67, Cys74, Cys81, Cys84, and Cys93 together coordinate Zn(2+). A DNA-binding region (zn(2)-C6 fungal-type) is located at residues Cys64–Cys93. Residues Glu105–Ser134 are a coiled coil. Residues Lys126–Asn208 are disordered. Over residues Lys130 to Ser142 the composition is skewed to low complexity. Composition is skewed to polar residues over residues Tyr143–Phe152 and Thr160–His176. A compositionally biased stretch (low complexity) spans Gln177–Asn208. A heme-responsive; required for HMC formation region spans residues Lys244–Ser444. HRM repeat units follow at residues Lys280–His285, Lys299–His304, Lys323–His328, Arg347–His352, Lys389–His394, and Arg415–His420. Polar residues-rich tracts occupy residues Ser432 to His447 and Gln706 to Leu734. 2 disordered regions span residues Ser432 to His458 and Gln706 to Gln767. Low complexity predominate over residues Asn735–Asn759. The HRM 7 repeat unit spans residues Lys1192–Gln1197. A disordered region spans residues Thr1384 to Ser1411. The span at Asp1388–Ser1411 shows a compositional bias: polar residues.

In terms of assembly, binds DNA as a homodimer. Interacts with SRO9 and YDJ1. In the absence of heme, binds to at least four cellular proteins, including YDJ1 and SRO9, forming a high-molecular-weight complex (HMC) which results in repression of its activity and dictates its DNA-binding specificity.

It is found in the nucleus. Its function is as follows. Regulation of oxygen dependent gene expression. It modulates the expression of Iso-1 (CYP1) and Iso-2 (CYP3) cytochrome c. In response to heme, promotes transcription of genes encoding functions required for respiration, controlling oxidative damage and repression of anaerobic genes. Binds to the sequence 5'-CGGNNNTNNCGG-3'. Is non-functional in terms of iso-1 cytochrome c expression in strain S288c and its derivatives. The protein is Heme-responsive zinc finger transcription factor HAP1 (HAP1) of Saccharomyces cerevisiae (Baker's yeast).